A 217-amino-acid chain; its full sequence is Grancalcin (217 aa).

EF-hand domains are found at residues 48–83, 89–122, 119–154, and 155–180; these read SSAG…SGIN, FSLE…AALN, AALN…MGYR, and LSPQ…DYVA. Ca(2+) contacts are provided by Asp65, Asp69, and Glu71. Ca(2+) is bound by residues Asp132, Asp134, Ser136, Thr138, and Glu143.

In terms of assembly, homodimer. Interacts with SRI and LCP1. As to expression, detected in neutrophils and macrophages (at protein level). Highly expressed in bone marrow.

The protein resides in the cytoplasm. Its subcellular location is the cytoplasmic granule membrane. Functionally, calcium-binding protein that may play a role in the adhesion of neutrophils to fibronectin. May play a role in the formation of focal adhesions. In Homo sapiens (Human), this protein is Grancalcin (GCA).